Here is a 127-residue protein sequence, read N- to C-terminus: Single-stranded DNA-binding protein 2 (127 aa).

The SSB domain occupies 4-103 (INKVMLVGRC…ITINTIELLG (100 aa)). A disordered region spans residues 104–127 (SPRKEESTSTSAPNETQAVANANF). The span at 111-127 (TSTSAPNETQAVANANF) shows a compositional bias: polar residues.

In terms of assembly, homotetramer.

The sequence is that of Single-stranded DNA-binding protein 2 (ssb2) from Nostoc sp. (strain PCC 7120 / SAG 25.82 / UTEX 2576).